A 184-amino-acid polypeptide reads, in one-letter code: Endoribonuclease YbeY (184 aa).

2 stretches are compositionally biased toward acidic residues: residues 1-11 and 19-29; these read MTVEVGADENP and DGAGDESDDED. A disordered region spans residues 1 to 38; that stretch reads MTVEVGADENPDFAHDETDGAGDESDDEDAQGRDPELD. Residues His-146, His-150, and His-156 each contribute to the Zn(2+) site.

The protein belongs to the endoribonuclease YbeY family. Requires Zn(2+) as cofactor.

The protein resides in the cytoplasm. Functionally, single strand-specific metallo-endoribonuclease involved in late-stage 70S ribosome quality control and in maturation of the 3' terminus of the 16S rRNA. This Burkholderia pseudomallei (strain K96243) protein is Endoribonuclease YbeY.